A 727-amino-acid polypeptide reads, in one-letter code: Probable copper-importing P-type ATPase A (727 aa).

At 1–94 (MATNTKMETF…QTYLRKMKFD (94 aa)) the chain is on the cytoplasmic side. An HMA domain is found at 6 to 70 (KMETFVITGM…SVENIGYGAI (65 aa)). Cu(+)-binding residues include C17 and C20. Residues 95-115 (LIFSAILTLPLMLAMIAMMLG) traverse the membrane as a helical segment. Over 116 to 119 (SHGP) the chain is Extracellular. A helical membrane pass occupies residues 120 to 137 (IVSFFHLSLVQLLFALPV). Residues 138–161 (QFYVGWRFYKGAYHALKTKAPNMD) are Cytoplasmic-facing. Residues 162 to 181 (VLVAIGTSAAFALSIYNGFF) form a helical membrane-spanning segment. Residues 182 to 187 (PSHSHD) lie on the Extracellular side of the membrane. The chain crosses the membrane as a helical span at residues 188 to 203 (LYFESSSMIITLILLG). At 204 to 341 (KYLEHTAKSK…PIQQIADKIS (138 aa)) the chain is on the cytoplasmic side. Residues 342 to 362 (GIFVPIVLFLALVTLLVTGWL) form a helical membrane-spanning segment. The Extracellular portion of the chain corresponds to 363 to 375 (TKDWQLALLHSVS). A helical membrane pass occupies residues 376 to 396 (VLVIACPCALGLATPTAIMVG). The Cytoplasmic portion of the chain corresponds to 397-678 (TGVGAHNGIL…AATLKKIKQN (282 aa)). The active-site 4-aspartylphosphate intermediate is D425. D621 and D625 together coordinate Mg(2+). The helical transmembrane segment at 679-698 (LFWAFIYNTIGIPFAAFGFL) threads the bilayer. At 699 to 700 (NP) the chain is on the extracellular side. A helical transmembrane segment spans residues 701 to 721 (IIAGGAMAFSSISVLLNSLSL). Residues 722 to 727 (NRKTIK) lie on the Cytoplasmic side of the membrane.

This sequence belongs to the cation transport ATPase (P-type) (TC 3.A.3) family. Type IB subfamily. In terms of assembly, monomer. Interacts with the copper chaperone CopZ.

It localises to the cell membrane. The catalysed reaction is Cu(+)(in) + ATP + H2O = Cu(+)(out) + ADP + phosphate + H(+). Inhibited by vanadate. In terms of biological role, probably involved in copper import under copper limiting conditions. This Enterococcus hirae (strain ATCC 9790 / DSM 20160 / JCM 8729 / LMG 6399 / NBRC 3181 / NCIMB 6459 / NCDO 1258 / NCTC 12367 / WDCM 00089 / R) protein is Probable copper-importing P-type ATPase A (copA).